We begin with the raw amino-acid sequence, 505 residues long: Cholesteryl ester transfer protein (505 aa).

An N-terminal signal peptide occupies residues 1–24 (MLWAGGMRLGMARILLMLVHAAAA). N-linked (GlcNAc...) asparagine glycans are attached at residues N68 and N114. A disulfide bond links C169 and C210. N-linked (GlcNAc...) asparagine glycans are attached at residues N266, N344, and N422.

The protein belongs to the BPI/LBP/Plunc superfamily. BPI/LBP family. Highly expressed in liver brain, heart, and spleen. Secreted in plasma.

Its subcellular location is the secreted. It carries out the reaction cholesteryl (9Z-octadecenoate)(in) = cholesteryl (9Z-octadecenoate)(out). It catalyses the reaction 1,2,3-tri-(9Z-octadecenoyl)-glycerol(in) = 1,2,3-tri-(9Z-octadecenoyl)-glycerol(out). The catalysed reaction is cholesteryl (9Z,12Z)-octadecadienoate(in) = cholesteryl (9Z,12Z)-octadecadienoate(out). Functionally, involved in the transfer of neutral lipids, including cholesteryl ester and triglyceride, among lipoprotein particles. Allows the net movement of cholesteryl ester from high density lipoproteins/HDL to triglyceride-rich very low density lipoproteins/VLDL, and the equimolar transport of triglyceride from VLDL to HDL. Regulates the reverse cholesterol transport, by which excess cholesterol is removed from peripheral tissues and returned to the liver for elimination. The sequence is that of Cholesteryl ester transfer protein from Gallus gallus (Chicken).